Consider the following 996-residue polypeptide: Poly [ADP-ribose] polymerase (996 aa).

A DNA-binding region spans residues 1 to 369 (MEIDLPFKVE…TSTILKNISL (369 aa)). PARP-type zinc fingers lie at residues 7–89 (FKVE…DNCT) and 114–203 (FGIE…PVIK). Residues C19, C22, H51, C54, C126, C129, H161, and C164 each coordinate Zn(2+). Short sequence motifs (nuclear localization signal) lie at residues 211 to 214 (KKAK) and 232 to 235 (KIKK). The 139-residue stretch at 220–358 (EEDAASIKEL…EVRAIRYIPP (139 aa)) folds into the PADR1 zinc-binding domain. Residues 286 to 329 (GALLPCTDCKGRQLLFHKSGYLCNGDLTEWTKCTKLLKEPERKS) are zinc ribbon. Residues C291, C294, C308, and C318 each coordinate Zn(2+). Residues 370–507 (KKGDELDGPK…SIYTKSVPKS (138 aa)) form an automodification domain region. In terms of domain architecture, BRCT spans 382-473 (RERPPLYNIE…AGAINYISSM (92 aa)). One can recognise a WGR domain in the interval 527-625 (VAHVYVSRNK…ENFVKVAGRM (99 aa)). A PARP alpha-helical domain is found at 647-764 (KSKLPLSVQD…EIECAYSLLQ (118 aa)). A PARP catalytic domain is found at 773–996 (NPIDKHYEQL…YMLRMNFKYK (224 aa)).

It belongs to the ARTD/PARP family.

The protein localises to the nucleus. The catalysed reaction is NAD(+) + (ADP-D-ribosyl)n-acceptor = nicotinamide + (ADP-D-ribosyl)n+1-acceptor + H(+).. It catalyses the reaction L-aspartyl-[protein] + NAD(+) = 4-O-(ADP-D-ribosyl)-L-aspartyl-[protein] + nicotinamide. It carries out the reaction L-glutamyl-[protein] + NAD(+) = 5-O-(ADP-D-ribosyl)-L-glutamyl-[protein] + nicotinamide. Its function is as follows. Poly-ADP-ribosyltransferase that mediates poly-ADP-ribosylation of proteins and plays a key role in DNA repair. Mainly mediates glutamate and aspartate ADP-ribosylation of target proteins: the ADP-D-ribosyl group of NAD(+) is transferred to the acceptor carboxyl group of glutamate and aspartate residues and further ADP-ribosyl groups are transferred to the 2'-position of the terminal adenosine moiety, building up a polymer with an average chain length of 20-30 units. The chain is Poly [ADP-ribose] polymerase from Sarcophaga peregrina (Flesh fly).